The primary structure comprises 191 residues: Thymidine kinase (191 aa).

ATP-binding positions include G15–T22 and D88–Q91. E89 acts as the Proton acceptor in catalysis. Residues C145, C148, C183, and C186 each contribute to the Zn(2+) site.

It belongs to the thymidine kinase family. In terms of assembly, homotetramer.

The protein resides in the cytoplasm. It carries out the reaction thymidine + ATP = dTMP + ADP + H(+). This chain is Thymidine kinase, found in Clostridium botulinum (strain Kyoto / Type A2).